Consider the following 3434-residue polypeptide: Genome polyprotein (3434 aa).

Topologically, residues 1–106 (MSKKPGGPGR…NRGTKKKRGN (106 aa)) are cytoplasmic. Residues 2–15 (SKKPGGPGRNRAIN) are interaction with host EXOC1. A hydrophobic; homodimerization of capsid protein C region spans residues 37–72 (LLDGRGPVRFVLALMTFFKFTALAPTKALLGRWKRI). Positions 105-126 (GNNGPGLVMIITLMTVVSMVSS) are cleaved as a propeptide — ER anchor for the capsid protein C, removed in mature form by serine protease NS3. Residues 107-126 (NGPGLVMIITLMTVVSMVSS) form a helical membrane-spanning segment. Residues 127-248 (LKLSNFQGKV…DSTKASRYLM (122 aa)) lie on the Extracellular side of the membrane. N-linked (GlcNAc...) asparagine; by host glycosylation is present at N141. A helical membrane pass occupies residues 249-273 (KTENWIIRNPGYAFVAVLLGWMLGS). The Cytoplasmic segment spans residues 274–278 (NNGQR). The chain crosses the membrane as a helical span at residues 279–293 (VVFVVLLLLVAPAYS). At 294–745 (FNCLGMSNRD…QVFGGAFRTL (452 aa)) the chain is on the extracellular side. Disulfide bonds link C296–C323, C353–C409, C353–C414, C367–C398, C385–C409, C385–C414, C483–C580, and C597–C628. The interval 391–404 (DRGWGNGCGLFGKG) is fusion peptide. The helical transmembrane segment at 746 to 766 (FGGMSWITQGLMGALLLWMGV) threads the bilayer. Residues 767–772 (NARDRS) are Cytoplasmic-facing. A helical membrane pass occupies residues 773-793 (IALVMLATGGVLLFLATNVHA). Residues 794-1218 (DSGCAIDVGR…AFAEANSGGD (425 aa)) lie on the Extracellular side of the membrane. Intrachain disulfides connect C797/C808 and C848/C936. Residues N923, N968, and N1000 are each glycosylated (N-linked (GlcNAc...) asparagine; by host). Cystine bridges form between C972-C1016, C1073-C1122, C1084-C1105, C1084-C1106, C1105-C1109, and C1106-C1109. A helical membrane pass occupies residues 1219-1239 (VVHLALIAAFKIQPGFLAMTF). Topologically, residues 1240–1249 (LRGKWTNQEN) are cytoplasmic. Residues 1250–1270 (ILLALGAAFFQMAATDLNFSL) traverse the membrane as a helical segment. Over 1271–1286 (PGILNATATAWMLLRA) the chain is Lumenal. Residues 1287 to 1307 (ATQPSTSAIVMPLLCLLAPGM) traverse the membrane as a helical segment. Position 1308 (R1308) is a topological domain, cytoplasmic. The chain crosses the membrane as a helical span at residues 1309-1329 (LLYLDTYRITLIIIGICSLIG). The Lumenal portion of the chain corresponds to 1330 to 1340 (ERRRAAAKKKG). A helical membrane pass occupies residues 1341 to 1361 (AVLLGLALTSTGQFSASVMAA). The Cytoplasmic portion of the chain corresponds to 1362–1373 (GLMACNPNKKRG). The chain crosses the membrane as a helical span at residues 1374 to 1394 (WPATEVLTAVGLMFAIVGGLA). Topologically, residues 1395–1397 (ELD) are lumenal. A helical transmembrane segment spans residues 1398–1418 (VDSMSIPFVLAGLMAVSYTIS). The Cytoplasmic portion of the chain corresponds to 1419–1475 (GKSTDLWLERAADITWETDAAITGTSQRLDVKLDDDGDFHLINDPGVPWKIWVIRMT). The interval 1426 to 1465 (LERAADITWETDAAITGTSQRLDVKLDDDGDFHLINDPGV) is interacts with and activates NS3 protease. The segment at residues 1476–1496 (ALGFAAWTPWAIIPAGIGYWL) is an intramembrane region (helical). Residues 1497-2173 (TVKYAKRGGV…MALEELPDAL (677 aa)) lie on the Cytoplasmic side of the membrane. Residues 1504–1681 (GGVFWDTPAP…EREEEPVPEA (178 aa)) enclose the Peptidase S7 domain. Catalysis depends on charge relay system; for serine protease NS3 activity residues H1554, D1578, and S1638. One can recognise a Helicase ATP-binding domain in the interval 1684-1840 (ADMLRKKQLT…DTNAPVTDIQ (157 aa)). The tract at residues 1688 to 1691 (RKKQ) is important for RNA-binding. 1697–1704 (LHPGAGKT) serves as a coordination point for ATP. A DEAH box motif is present at residues 1788 to 1791 (DEAH). The Helicase C-terminal domain occupies 1851 to 2016 (GFEWITEYTG…GLVAQMYGPE (166 aa)). K1892 carries the post-translational modification N6-acetyllysine; by host. Residues 1956–1980 (ASAAQRRGRVGRNPSQIGDEYHYGG) are disordered. Residues 2167-2171 (EELPD) are regulates the ATPase activity of NS3 helicase. A helical transmembrane segment spans residues 2174–2194 (ETITLIVALAVMTAGVFLLLV). Residues 2195–2198 (QRRG) lie on the Lumenal side of the membrane. Residues 2199-2219 (IGKLGLGGMVLGLATFFLWMA) constitute an intramembrane region (helical). Position 2220 (D2220) is a topological domain, lumenal. Residues 2221–2241 (VSGTKIAGTLLLALLMMIVLI) traverse the membrane as a helical segment. Residues 2242 to 2256 (PEPEKQRSQTDNQLA) lie on the Cytoplasmic side of the membrane. A helical membrane pass occupies residues 2257–2277 (VFLICVLLVVGVVAANEYGML). The Lumenal segment spans residues 2278 to 2313 (ERTKSDLGKIFSSTRQPQSALPLPSMNALALDLRPA). Positions 2314–2334 (TAWALYGGSTVVLTPLIKHLV) form an intramembrane region, helical. The Lumenal segment spans residues 2335–2368 (TSEYITTSLASISAQAGSLFNLPRGLPFTELDFT). A helical membrane pass occupies residues 2369–2389 (VVLVFLGCWGQVSLTTLITAA). The Cytoplasmic segment spans residues 2390 to 2446 (ALATLHYGYMLPGWQAEALRAAQRRTAAGIMKNAVVDGLVATDVPELERTTPLMQKK). A helical membrane pass occupies residues 2447 to 2467 (VGQILLIGVSAAALLVNPCVT). Topologically, residues 2468 to 2471 (TVRE) are lumenal. A helical transmembrane segment spans residues 2472–2492 (AGILISAALLTLWDNGAIAVW). Topologically, residues 2493 to 3434 (NSTTATGLCH…EVNVQEDRVL (942 aa)) are cytoplasmic. In terms of domain architecture, mRNA cap 0-1 NS5-type MT spans 2530–2795 (GRPGGRTLGE…DVNLGSGTRA (266 aa)). A disordered region spans residues 2567–2587 (SAARKARRDGNKTGGHPVSRG). Residue S2585 participates in S-adenosyl-L-methionine binding. Position 2585 is a phosphoserine (S2585). K2590 acts as the For 2'-O-MTase activity in catalysis. S-adenosyl-L-methionine contacts are provided by G2615, W2616, T2633, K2634, D2660, and V2661. The active-site For 2'-O-MTase activity is D2675. Residue I2676 participates in S-adenosyl-L-methionine binding. Active-site for 2'-O-MTase activity residues include K2711 and E2747. S-adenosyl-L-methionine is bound at residue Y2749. Positions 2969, 2973, 2978, and 2981 each coordinate Zn(2+). One can recognise a RdRp catalytic domain in the interval 3059-3211 (GKMYADDTAG…KPLDDRFANA (153 aa)). 3 residues coordinate Zn(2+): H3246, C3262, and C3381.

This sequence in the N-terminal section; belongs to the class I-like SAM-binding methyltransferase superfamily. mRNA cap 0-1 NS5-type methyltransferase family. As to quaternary structure, homodimer. Interacts (via N-terminus) with host EXOC1 (via C-terminus); this interaction results in EXOC1 degradation through the proteasome degradation pathway. Forms heterodimers with envelope protein E in the endoplasmic reticulum and Golgi. In terms of assembly, homodimer; in the endoplasmic reticulum and Golgi. Interacts with protein prM. Interacts with non-structural protein 1. As to quaternary structure, homodimer; Homohexamer when secreted. Interacts with envelope protein E. NS1 interacts with NS4B. Interacts with host complement protein CFH; this interaction leads to the degradation of C3. Interacts (via N-terminus) with serine protease NS3. In terms of assembly, forms a heterodimer with serine protease NS3. May form homooligomers. As to quaternary structure, forms a heterodimer with NS2B. Interacts with non-structural protein 2A (via N-terminus). Interacts with NS4B. Interacts with unphosphorylated RNA-directed RNA polymerase NS5; this interaction stimulates RNA-directed RNA polymerase NS5 guanylyltransferase activity. Interacts with serine protease NS3. In terms of assembly, homodimer. Interacts with host STAT2; this interaction inhibits the phosphorylation of the latter, and, when all viral proteins are present (polyprotein), targets STAT2 for degradation. Interacts with serine protease NS3. Specific enzymatic cleavages in vivo yield mature proteins. Cleavages in the lumen of endoplasmic reticulum are performed by host signal peptidase, whereas cleavages in the cytoplasmic side are performed by serine protease NS3. Signal cleavage at the 2K-4B site requires a prior NS3 protease-mediated cleavage at the 4A-2K site. In terms of processing, cleaved in post-Golgi vesicles by a host furin, releasing the mature small envelope protein M, and peptide pr. This cleavage is incomplete as up to 30% of viral particles still carry uncleaved prM. Post-translationally, N-glycosylated. N-glycosylated. The excreted form is glycosylated and this is required for efficient secretion of the protein from infected cells. In terms of processing, acetylated by host KAT5. Acetylation modulates NS3 RNA-binding and unwinding activities and plays an important positive role for viral replication. Post-translationally, phosphorylated on serines residues. This phosphorylation may trigger NS5 nuclear localization.

Its subcellular location is the virion. The protein resides in the host nucleus. The protein localises to the host cytoplasm. It is found in the host perinuclear region. It localises to the secreted. Its subcellular location is the virion membrane. The protein resides in the host endoplasmic reticulum membrane. It carries out the reaction Selective hydrolysis of -Xaa-Xaa-|-Yaa- bonds in which each of the Xaa can be either Arg or Lys and Yaa can be either Ser or Ala.. The catalysed reaction is RNA(n) + a ribonucleoside 5'-triphosphate = RNA(n+1) + diphosphate. The enzyme catalyses a ribonucleoside 5'-triphosphate + H2O = a ribonucleoside 5'-diphosphate + phosphate + H(+). It catalyses the reaction ATP + H2O = ADP + phosphate + H(+). It carries out the reaction a 5'-end (5'-triphosphoguanosine)-ribonucleoside in mRNA + S-adenosyl-L-methionine = a 5'-end (N(7)-methyl 5'-triphosphoguanosine)-ribonucleoside in mRNA + S-adenosyl-L-homocysteine. The catalysed reaction is a 5'-end (N(7)-methyl 5'-triphosphoguanosine)-ribonucleoside in mRNA + S-adenosyl-L-methionine = a 5'-end (N(7)-methyl 5'-triphosphoguanosine)-(2'-O-methyl-ribonucleoside) in mRNA + S-adenosyl-L-homocysteine + H(+). Its function is as follows. Plays a role in virus budding by binding to the cell membrane and gathering the viral RNA into a nucleocapsid that forms the core of a mature virus particle. During virus entry, may induce genome penetration into the host cytoplasm after hemifusion induced by the surface proteins. Can migrate to the cell nucleus where it modulates host functions. Overcomes the anti-viral effects of host EXOC1 by sequestering and degrading the latter through the proteasome degradation pathway. Inhibits RNA silencing by interfering with host Dicer. Functionally, prevents premature fusion activity of envelope proteins in trans-Golgi by binding to envelope protein E at pH6.0. After virion release in extracellular space, gets dissociated from E dimers. In terms of biological role, acts as a chaperone for envelope protein E during intracellular virion assembly by masking and inactivating envelope protein E fusion peptide. prM is the only viral peptide matured by host furin in the trans-Golgi network probably to avoid catastrophic activation of the viral fusion activity in acidic Golgi compartment prior to virion release. prM-E cleavage is inefficient, and many virions are only partially matured. These uncleaved prM would play a role in immune evasion. Its function is as follows. May play a role in virus budding. Exerts cytotoxic effects by activating a mitochondrial apoptotic pathway through M ectodomain. May display a viroporin activity. Binds to host cell surface receptor and mediates fusion between viral and cellular membranes. Envelope protein is synthesized in the endoplasmic reticulum in the form of heterodimer with protein prM. They play a role in virion budding in the ER, and the newly formed immature particle is covered with 60 spikes composed of heterodimer between precursor prM and envelope protein E. The virion is transported to the Golgi apparatus where the low pH causes dissociation of PrM-E heterodimers and formation of E homodimers. prM-E cleavage is inefficient, and many virions are only partially matured. These uncleaved prM would play a role in immune evasion. Functionally, involved in immune evasion, pathogenesis and viral replication. Once cleaved off the polyprotein, is targeted to three destinations: the viral replication cycle, the plasma membrane and the extracellular compartment. Essential for viral replication. Required for formation of the replication complex and recruitment of other non-structural proteins to the ER-derived membrane structures. Excreted as a hexameric lipoparticle that plays a role against host immune response. Antagonizing the complement function. Binds to the host macrophages and dendritic cells. Inhibits signal transduction originating from Toll-like receptor 3 (TLR3). In terms of biological role, component of the viral RNA replication complex that functions in virion assembly and antagonizes the host alpha/beta interferon antiviral response. Its function is as follows. Required cofactor for the serine protease function of NS3. May have membrane-destabilizing activity and form viroporins. Displays three enzymatic activities: serine protease, NTPase and RNA helicase. NS3 serine protease, in association with NS2B, performs its autocleavage and cleaves the polyprotein at dibasic sites in the cytoplasm: C-prM, NS2A-NS2B, NS2B-NS3, NS3-NS4A, NS4A-2K and NS4B-NS5. NS3 RNA helicase binds RNA and unwinds dsRNA in the 3' to 5' direction. Functionally, regulates the ATPase activity of the NS3 helicase activity. NS4A allows NS3 helicase to conserve energy during unwinding. In terms of biological role, functions as a signal peptide for NS4B and is required for the interferon antagonism activity of the latter. Its function is as follows. Induces the formation of ER-derived membrane vesicles where the viral replication takes place. Inhibits interferon (IFN)-induced host STAT1 phosphorylation and nuclear translocation, thereby preventing the establishment of cellular antiviral state by blocking the IFN-alpha/beta pathway. Inhibits STAT2 translocation in the nucleus after IFN-alpha treatment. Replicates the viral (+) and (-) RNA genome, and performs the capping of genomes in the cytoplasm. NS5 methylates viral RNA cap at guanine N-7 and ribose 2'-O positions. Besides its role in RNA genome replication, also prevents the establishment of cellular antiviral state by blocking the interferon-alpha/beta (IFN-alpha/beta) signaling pathway. Inhibits host TYK2 and STAT2 phosphorylation, thereby preventing activation of JAK-STAT signaling pathway. This is Genome polyprotein from Usutu virus (USUV).